Consider the following 341-residue polypeptide: tRNA N6-adenosine threonylcarbamoyltransferase (341 aa).

Fe cation is bound by residues His111 and His115. Substrate-binding positions include 134 to 138 (LVSGG), Asp167, Gly180, and Asn276. Asp304 contributes to the Fe cation binding site.

Belongs to the KAE1 / TsaD family. It depends on Fe(2+) as a cofactor.

Its subcellular location is the cytoplasm. It catalyses the reaction L-threonylcarbamoyladenylate + adenosine(37) in tRNA = N(6)-L-threonylcarbamoyladenosine(37) in tRNA + AMP + H(+). Required for the formation of a threonylcarbamoyl group on adenosine at position 37 (t(6)A37) in tRNAs that read codons beginning with adenine. Is involved in the transfer of the threonylcarbamoyl moiety of threonylcarbamoyl-AMP (TC-AMP) to the N6 group of A37, together with TsaE and TsaB. TsaD likely plays a direct catalytic role in this reaction. The polypeptide is tRNA N6-adenosine threonylcarbamoyltransferase (Pseudomonas syringae pv. syringae (strain B728a)).